The primary structure comprises 79 residues: EAMZP30-47 protein (79 aa).

The segment covering 1-12 (HAASPRGRPQQR) has biased composition (low complexity). The tract at residues 1–47 (HAASPRGRPQQRSSRHGAEGPDTTRRGSCCSSSSSCCRPSTPRHPHN) is disordered. Residues 16–25 (HGAEGPDTTR) are compositionally biased toward basic and acidic residues. Residues 28 to 37 (SCCSSSSSCC) show a composition bias toward low complexity.

Its subcellular location is the membrane. It is found in the cell membrane. The protein localises to the cytoplasmic vesicle. The protein resides in the secretory vesicle. It localises to the rhoptry. In Eimeria acervulina (Coccidian parasite), this protein is EAMZP30-47 protein (CMC17).